The primary structure comprises 143 residues: Small ribosomal subunit protein uS12 (143 aa).

Basic residues predominate over residues 1 to 19; sequence MGKPRGIRTARKHVNHRRE. A disordered region spans residues 1–21; the sequence is MGKPRGIRTARKHVNHRREQR. Pro62 bears the Hydroxyproline mark.

It belongs to the universal ribosomal protein uS12 family. In terms of assembly, component of the 40S small ribosomal subunit.

The protein resides in the cytoplasm. It localises to the cytosol. It is found in the rough endoplasmic reticulum. The protein is Small ribosomal subunit protein uS12 (RpS23) of Papilio dardanus (African swallowtail butterfly).